Consider the following 37-residue polypeptide: Cytochrome b6-f complex subunit 5 (37 aa).

Residues 5–25 traverse the membrane as a helical segment; that stretch reads LLCGIVLGLIPITLMGLFVAA.

It belongs to the PetG family. The 4 large subunits of the cytochrome b6-f complex are cytochrome b6, subunit IV (17 kDa polypeptide, PetD), cytochrome f and the Rieske protein, while the 4 small subunits are PetG, PetL, PetM and PetN. The complex functions as a dimer.

Its subcellular location is the cellular thylakoid membrane. Component of the cytochrome b6-f complex, which mediates electron transfer between photosystem II (PSII) and photosystem I (PSI), cyclic electron flow around PSI, and state transitions. PetG is required for either the stability or assembly of the cytochrome b6-f complex. The sequence is that of Cytochrome b6-f complex subunit 5 from Synechococcus sp. (strain CC9311).